Reading from the N-terminus, the 236-residue chain is 3-oxoacyl-[acyl-carrier-protein] reductase (236 aa).

Methionine 1 bears the N-acetylmethionine mark. NADP(+) contacts are provided by residues 11 to 14 and 34 to 35; these read SRGI and RN. N6-acetyllysine is present on lysine 40. Position 83–85 (83–85) interacts with NADP(+); it reads AAG. The residue at position 96 (lysine 96) is an N6-acetyllysine. Position 134 (serine 134) interacts with substrate. Residues tyrosine 147, lysine 151, and 180 to 182 each bind NADP(+); that span reads IHT. Tyrosine 147 functions as the Proton acceptor in the catalytic mechanism. Position 194 is an N6-acetyllysine (lysine 194).

Belongs to the short-chain dehydrogenases/reductases (SDR) family. In terms of assembly, homotetramer (in vitro). Heterotetramer with HSD17B8; contains two molecules each of HSD17B8 and CBR4. Does not form homotetramers when HSD17B8 is coexpressed, only heterotetramers (in vitro).

The protein resides in the mitochondrion matrix. The enzyme catalyses a (3R)-hydroxyacyl-[ACP] + NADP(+) = a 3-oxoacyl-[ACP] + NADPH + H(+). It carries out the reaction a quinone + NADPH + H(+) = a quinol + NADP(+). It functions in the pathway lipid metabolism; fatty acid biosynthesis. Component of the heterotetramer complex KAR (3-ketoacyl-[acyl carrier protein] reductase or 3-ketoacyl-[ACP] reductase) that forms part of the mitochondrial fatty acid synthase (mtFAS). Beta-subunit of the KAR heterotetramer complex, responsible for the 3-ketoacyl-ACP reductase activity of the mtFAS, reduces 3-oxoacyl-[ACP] to (3R)-hydroxyacyl-[ACP] in a NADPH-dependent manner with no chain length preference, thereby participating in mitochondrial fatty acid biosynthesis. The homotetramer has NADPH-dependent quinone reductase activity (in vitro), hence could play a role in protection against cytotoxicity of exogenous quinones. As a heterotetramer, it can also reduce 9,10-phenanthrenequinone, 1,4-benzoquinone and various other o-quinones and p-quinones (in vitro). The chain is 3-oxoacyl-[acyl-carrier-protein] reductase (Cbr4) from Rattus norvegicus (Rat).